Reading from the N-terminus, the 219-residue chain is Transmembrane protein 17B (219 aa).

Asn-26 carries N-linked (GlcNAc...) asparagine glycosylation. The next 4 membrane-spanning stretches (helical) occupy residues 51 to 71 (MMLYFNAFFFPFWIISEIITM), 84 to 104 (ILLTTSLVILTLVESLRLYIG), 116 to 136 (LAGFLILTLLIQLPLLLFLLT), and 147 to 167 (LAVHMIYLMFINAEIVISFLV). N-linked (GlcNAc...) asparagine glycans are attached at residues Asn-195 and Asn-203.

The protein belongs to the TMEM17 family. As to quaternary structure, part of the tectonic-like complex (also named B9 complex).

The protein localises to the cell projection. It localises to the cilium membrane. Functionally, transmembrane component of the tectonic-like complex, a complex localized at the transition zone of primary cilia and acting as a barrier that prevents diffusion of transmembrane proteins between the cilia and plasma membranes. Required for ciliogenesis and sonic hedgehog/SHH signaling. The sequence is that of Transmembrane protein 17B (Tmem17-b) from Xenopus tropicalis (Western clawed frog).